The following is a 617-amino-acid chain: V-type proton ATPase catalytic subunit A (617 aa).

Asp-2 carries the N-acetylalanine modification. Thr-136 carries the phosphothreonine modification. 250–257 (GAFGCGKT) contacts ATP. Phosphoserine; by AMPK is present on Ser-384.

Belongs to the ATPase alpha/beta chains family. As to quaternary structure, V-ATPase is a heteromultimeric enzyme made up of two complexes: the ATP-hydrolytic V1 complex and the proton translocation V0 complex. The V1 complex consists of three catalytic AB heterodimers that form a heterohexamer, three peripheral stalks each consisting of EG heterodimers, one central rotor including subunits D and F, and the regulatory subunits C and H. The proton translocation complex V0 consists of the proton transport subunit a, a ring of proteolipid subunits c9c'', rotary subunit d, subunits e and f, and the accessory subunits ATP6AP1/Ac45 and ATP6AP2/PRR. Interacts with the V0 complex V-ATPase subunit a4 ATP6V0A4. Interacts with WFS1. Interacts with alpha-crystallin B chain/CRYAB and with MTOR, forming a ternary complex. In terms of assembly, (Microbial infection) Interacts with Rabies virus protein M; this interaction promotes virion uncoating. Phosphorylation at Ser-384 by AMPK down-regulates its enzyme activity. As to expression, high expression in the skin.

Its subcellular location is the cytoplasm. The protein resides in the cytosol. It is found in the cytoplasmic vesicle. The protein localises to the secretory vesicle. It localises to the clathrin-coated vesicle membrane. Its subcellular location is the lysosome. The catalysed reaction is ATP + H2O + 4 H(+)(in) = ADP + phosphate + 5 H(+)(out). With respect to regulation, ATP hydrolysis occurs at the interface between the nucleotide-binding domains of subunits A and B. ATP hydrolysis triggers a conformational change in the subunits D and F, which induces a shift of subunit d. The c-ring is subsequently rotated and results in a continuous proton translocation across the membrane. Its function is as follows. Catalytic subunit of the V1 complex of vacuolar(H+)-ATPase (V-ATPase), a multisubunit enzyme composed of a peripheral complex (V1) that hydrolyzes ATP and a membrane integral complex (V0) that translocates protons. V-ATPase is responsible for acidifying and maintaining the pH of intracellular compartments and in some cell types, is targeted to the plasma membrane, where it is responsible for acidifying the extracellular environment. In aerobic conditions, involved in intracellular iron homeostasis, thus triggering the activity of Fe(2+) prolyl hydroxylase (PHD) enzymes, and leading to HIF1A hydroxylation and subsequent proteasomal degradation. May play a role in neurite development and synaptic connectivity. In terms of biological role, (Microbial infection) Plays an important role in virion uncoating during Rabies virus replication after membrane fusion. Specifically, participates in the dissociation of incoming viral matrix M proteins uncoating through direct interaction. The polypeptide is V-type proton ATPase catalytic subunit A (ATP6V1A) (Homo sapiens (Human)).